Consider the following 508-residue polypeptide: Chromosomal replication initiator protein DnaA (508 aa).

The domain I, interacts with DnaA modulators stretch occupies residues 1–91 (MADDPGSSFT…TDALSRRLGQ (91 aa)). The segment at 91-167 (QQIQLGVRIA…AIDPAVAAGT (77 aa)) is domain II. Positions 104 to 152 (DDVEDALIPSAEPFPDTDADLSARRRTDSRASGERGAVTNTQPGWTNYF) are disordered. Residues 124-136 (LSARRRTDSRASG) show a composition bias toward basic and acidic residues. The segment covering 141-152 (VTNTQPGWTNYF) has biased composition (polar residues). Positions 168-384 (SLNRRYTFDT…GALIRVTAFA (217 aa)) are domain III, AAA+ region. ATP is bound by residues glycine 212, glycine 214, lysine 215, and threonine 216. Positions 385 to 508 (SLNKTPIDKS…TTRIRQRSKR (124 aa)) are domain IV, binds dsDNA.

The protein belongs to the DnaA family. Oligomerizes as a right-handed, spiral filament on DNA at oriC.

It is found in the cytoplasm. Its function is as follows. Plays an essential role in the initiation and regulation of chromosomal replication. ATP-DnaA binds to the origin of replication (oriC) to initiate formation of the DNA replication initiation complex once per cell cycle. Binds the DnaA box (a 9 base pair repeat at the origin) and separates the double-stranded (ds)DNA. Forms a right-handed helical filament on oriC DNA; dsDNA binds to the exterior of the filament while single-stranded (ss)DNA is stabiized in the filament's interior. The ATP-DnaA-oriC complex binds and stabilizes one strand of the AT-rich DNA unwinding element (DUE), permitting loading of DNA polymerase. After initiation quickly degrades to an ADP-DnaA complex that is not apt for DNA replication. Binds acidic phospholipids. The protein is Chromosomal replication initiator protein DnaA of Mycobacterium avium.